The following is a 291-amino-acid chain: ATP synthase gamma chain (291 aa).

Belongs to the ATPase gamma chain family. F-type ATPases have 2 components, CF(1) - the catalytic core - and CF(0) - the membrane proton channel. CF(1) has five subunits: alpha(3), beta(3), gamma(1), delta(1), epsilon(1). CF(0) has three main subunits: a, b and c.

It is found in the cell inner membrane. Its function is as follows. Produces ATP from ADP in the presence of a proton gradient across the membrane. The gamma chain is believed to be important in regulating ATPase activity and the flow of protons through the CF(0) complex. The chain is ATP synthase gamma chain from Burkholderia cenocepacia (strain ATCC BAA-245 / DSM 16553 / LMG 16656 / NCTC 13227 / J2315 / CF5610) (Burkholderia cepacia (strain J2315)).